Reading from the N-terminus, the 328-residue chain is Tetraacyldisaccharide 4'-kinase (328 aa).

52–59 is a binding site for ATP; that stretch reads NAGGTGKT.

This sequence belongs to the LpxK family.

The catalysed reaction is a lipid A disaccharide + ATP = a lipid IVA + ADP + H(+). It participates in glycolipid biosynthesis; lipid IV(A) biosynthesis; lipid IV(A) from (3R)-3-hydroxytetradecanoyl-[acyl-carrier-protein] and UDP-N-acetyl-alpha-D-glucosamine: step 6/6. Transfers the gamma-phosphate of ATP to the 4'-position of a tetraacyldisaccharide 1-phosphate intermediate (termed DS-1-P) to form tetraacyldisaccharide 1,4'-bis-phosphate (lipid IVA). This chain is Tetraacyldisaccharide 4'-kinase, found in Jannaschia sp. (strain CCS1).